The following is a 207-amino-acid chain: MALPFARCWKLYRWGTKRWGVPAVESRRGISFKLEEKTAHSSLALFRGDTGVKYGLVGLEPTKVALNLERFREWAVVLGDTTVTSGRHYWEVTVKRSQQFRIGVADVDMSRDSCVGADDRSWVFSYAQRKWHSMLANEKAPIKGIGQPEKVGLLLDYEAKKLSLVDVSRISVIHTLQTDFRGPVAPAFALWDGELLTHSGLEVPKGL.

In terms of domain architecture, B30.2/SPRY spans 12-207 (YRWGTKRWGV…HSGLEVPKGL (196 aa)). Residues K53 and K130 each carry the N6-acetyllysine modification. K139 carries the post-translational modification N6-succinyllysine.

This is SPRY domain-containing protein 4 (Spryd4) from Mus musculus (Mouse).